We begin with the raw amino-acid sequence, 403 residues long: Soluble calcium-activated nucleotidase 1 (403 aa).

The Cytoplasmic portion of the chain corresponds to 1-44 (MPIQPFDQREWNEPMHSLRISVGGLPVLASMTKATDPRFRPRWR). A helical; Signal-anchor for type II membrane protein membrane pass occupies residues 45–61 (VILTSFVGAALLWLLYS). Topologically, residues 62–403 (HHQTPVSGRP…SVKYEGIEFI (342 aa)) are lumenal. N-linked (GlcNAc...) asparagine glycosylation occurs at N90. Positions 170, 171, 217, 286, 347, and 398 each coordinate Ca(2+).

Belongs to the apyrase family. Monomer. Homodimer; dimerization is Ca(2+)-dependent. Requires Ca(2+) as cofactor. In terms of tissue distribution, detected in intestine, thymus, heart, lung, spleen, kidney, liver, testis, skeletal muscle and brain.

It is found in the endoplasmic reticulum membrane. The protein resides in the golgi apparatus. The protein localises to the golgi stack membrane. It carries out the reaction a ribonucleoside 5'-diphosphate + H2O = a ribonucleoside 5'-phosphate + phosphate + H(+). Functionally, calcium-dependent nucleotidase with a preference for UDP. The order of activity with different substrates is UDP &gt; GDP &gt; IDP &gt;&gt; UTP &gt; CDP = GTP = ITP. Has very low activity towards ADP and even lower activity towards ATP. Does not hydrolyze AMP and GMP. Involved in proteoglycan synthesis. The chain is Soluble calcium-activated nucleotidase 1 (Cant1) from Rattus norvegicus (Rat).